Reading from the N-terminus, the 86-residue chain is uncharacterized protein (86 aa).

This is an uncharacterized protein from Sus scrofa (Pig).